The primary structure comprises 87 residues: Protein Isd11 (87 aa).

Belongs to the complex I LYR family. As to quaternary structure, interacts with IscS; the interaction enhances cysteine desulfurase activity of IscS. Component of a complex, at least composed of IscS, Isd11 and IscU.

The protein localises to the mitochondrion. It functions in the pathway cofactor biosynthesis; iron-sulfur cluster biosynthesis. Participates in iron-sulfur cluster formation (ISC) pathway for iron-sulfur (Fe-S) cluster biogenesis. Enhances cysteine desulfurase activity of IscS. This chain is Protein Isd11, found in Plasmodium falciparum (isolate 3D7).